A 699-amino-acid polypeptide reads, in one-letter code: Elongation factor G (699 aa).

The tr-type G domain occupies 8–283; it reads EHIRNIGICA…AVVDFLPSPI (276 aa). Residues 17–24, 81–85, and 135–138 contribute to the GTP site; these read AHIDAGKT, DTPGH, and NKMD.

The protein belongs to the TRAFAC class translation factor GTPase superfamily. Classic translation factor GTPase family. EF-G/EF-2 subfamily.

It localises to the cytoplasm. In terms of biological role, catalyzes the GTP-dependent ribosomal translocation step during translation elongation. During this step, the ribosome changes from the pre-translocational (PRE) to the post-translocational (POST) state as the newly formed A-site-bound peptidyl-tRNA and P-site-bound deacylated tRNA move to the P and E sites, respectively. Catalyzes the coordinated movement of the two tRNA molecules, the mRNA and conformational changes in the ribosome. The sequence is that of Elongation factor G from Rickettsia rickettsii (strain Iowa).